Consider the following 121-residue polypeptide: Small ribosomal subunit protein uS13 (121 aa).

The segment at 91 to 121 (HKRGLPVRGQRTRTNARTRKGPRRAAASLKK) is disordered.

The protein belongs to the universal ribosomal protein uS13 family. Part of the 30S ribosomal subunit. Forms a loose heterodimer with protein S19. Forms two bridges to the 50S subunit in the 70S ribosome.

In terms of biological role, located at the top of the head of the 30S subunit, it contacts several helices of the 16S rRNA. In the 70S ribosome it contacts the 23S rRNA (bridge B1a) and protein L5 of the 50S subunit (bridge B1b), connecting the 2 subunits; these bridges are implicated in subunit movement. Contacts the tRNAs in the A and P-sites. In Bordetella avium (strain 197N), this protein is Small ribosomal subunit protein uS13.